Reading from the N-terminus, the 432-residue chain is Anaerobic glycerol-3-phosphate dehydrogenase subunit B (432 aa).

Belongs to the anaerobic G-3-P dehydrogenase subunit B family. In terms of assembly, composed of a catalytic GlpA/B dimer and of membrane bound GlpC. It depends on FMN as a cofactor.

It catalyses the reaction a quinone + sn-glycerol 3-phosphate = dihydroxyacetone phosphate + a quinol. It functions in the pathway polyol metabolism; glycerol degradation via glycerol kinase pathway; glycerone phosphate from sn-glycerol 3-phosphate (anaerobic route): step 1/1. Conversion of glycerol 3-phosphate to dihydroxyacetone. Uses fumarate or nitrate as electron acceptor. This is Anaerobic glycerol-3-phosphate dehydrogenase subunit B from Haemophilus influenzae (strain 86-028NP).